Reading from the N-terminus, the 169-residue chain is Peptide deformylase (169 aa).

Residues Cys91 and His133 each coordinate Fe cation. Residue Glu134 is part of the active site. His137 provides a ligand contact to Fe cation.

Belongs to the polypeptide deformylase family. Requires Fe(2+) as cofactor.

The catalysed reaction is N-terminal N-formyl-L-methionyl-[peptide] + H2O = N-terminal L-methionyl-[peptide] + formate. Removes the formyl group from the N-terminal Met of newly synthesized proteins. Requires at least a dipeptide for an efficient rate of reaction. N-terminal L-methionine is a prerequisite for activity but the enzyme has broad specificity at other positions. This is Peptide deformylase from Aliivibrio salmonicida (strain LFI1238) (Vibrio salmonicida (strain LFI1238)).